We begin with the raw amino-acid sequence, 497 residues long: Angiopoietin-1 (497 aa).

An N-terminal signal peptide occupies residues 1–19 (MTVFLSFAFLAAILTHIGC). Residues asparagine 92, asparagine 122, asparagine 154, asparagine 243, and asparagine 294 are each glycosylated (N-linked (GlcNAc...) asparagine). The stretch at 158 to 256 (RLEIQLLENS…LQKQQLELMD (99 aa)) forms a coiled coil. One can recognise a Fibrinogen C-terminal domain in the interval 276–496 (KEEEKPFRDC…STTMMIRPLD (221 aa)). 2 disulfides stabilise this stretch: cysteine 285-cysteine 314 and cysteine 438-cysteine 451.

As to quaternary structure, homooligomer. Interacts with TEK/TIE2. Interacts with SVEP1/polydom. Interacts with THBD; this interaction significantly inhibits the generation of activated PC and TAFIa/CPB2 by the thrombin/thrombomodulin complex.

It is found in the secreted. Binds and activates TIE2 receptor by inducing its tyrosine phosphorylation. Implicated in endothelial developmental processes later and distinct from that of VEGF. Appears to play a crucial role in mediating reciprocal interactions between the endothelium and surrounding matrix and mesenchyme. Mediates blood vessel maturation/stability. It may play an important role in the heart early development. The chain is Angiopoietin-1 (ANGPT1) from Canis lupus familiaris (Dog).